The primary structure comprises 325 residues: MSETATWQPSASIPNLLKRAAIMAEIRRFFADRGVLEVETPCMSQATVTDIHLFPFETRFVGPGHSQGINLYLMTSPEYHMKRLLAAGCGPVFQLCRSFRNEEMGRHHNPEFTMLEWYRPHYDMYRLMNEVDDLLQQVLDCQPAESLSYQQAFQGHLEIDPLSADKTQLREAVAKLDLSNIADTEEDRDTLLQLLLTMGVEPHIGKEKPTFIYHFPASQASLAQISTEDHRVAERFEVYYKGIELANGFHELTDAREQQQRFEQDNRKRAARGLPQQPIDQNLLDALAAGLPDCSGVALGVDRLVMLALGAESLADVIAFTVDRA.

Position 76-78 (76-78) interacts with substrate; it reads SPE. Residues 100–102 and Asn109 each bind ATP; that span reads RNE. Position 118 (Tyr118) interacts with substrate. Residue 244-245 participates in ATP binding; the sequence is EL. Glu251 is a substrate binding site. Gly300 is an ATP binding site.

It belongs to the class-II aminoacyl-tRNA synthetase family. EpmA subfamily. In terms of assembly, homodimer.

It catalyses the reaction D-beta-lysine + L-lysyl-[protein] + ATP = N(6)-((3R)-3,6-diaminohexanoyl)-L-lysyl-[protein] + AMP + diphosphate + H(+). Functionally, with EpmB is involved in the beta-lysylation step of the post-translational modification of translation elongation factor P (EF-P) on 'Lys-34'. Catalyzes the ATP-dependent activation of (R)-beta-lysine produced by EpmB, forming a lysyl-adenylate, from which the beta-lysyl moiety is then transferred to the epsilon-amino group of EF-P 'Lys-34'. This is Elongation factor P--(R)-beta-lysine ligase from Salmonella gallinarum (strain 287/91 / NCTC 13346).